The sequence spans 593 residues: Chromodomain Y-like protein (593 aa).

Over residues 1–14 (MGIGNSQPNSQEAQ) the composition is skewed to polar residues. A disordered region spans residues 1–30 (MGIGNSQPNSQEAQLCTLPEKAEQPTDDNT). Residues 56–116 (TQVESIVDKR…RHNERQKEGS (61 aa)) form the Chromo domain. Positions 56-304 (TQVESIVDKR…TIQTSVTGVT (249 aa)) are interaction with EZH2. Phosphoserine is present on S83. Residues 110–158 (ERQKEGSLARASRASPSNARKQISRSTHSTLSKTNSKALVVGKDHESKS) are disordered. Residues 117–129 (LARASRASPSNAR) are compositionally biased toward low complexity. K130 is subject to N6,N6,N6-trimethyllysine; by EHMT2; alternate. K130 bears the N6,N6-dimethyllysine; by EHMT2; alternate mark. K130 bears the N6-methyllysine; by EHMT2; alternate mark. Residues 133–146 (SRSTHSTLSKTNSK) are compositionally biased toward polar residues. S165, S196, and S211 each carry phosphoserine. The segment at 200–223 (GRTSVDGFQGESPEKLDPVDQGAE) is disordered. The segment at 357–589 (SENNSLNPEV…DSMLKYLQRK (233 aa)) is acetyl-CoA-binding domain.

Forms multimers and multimerization is required for stable binding to chromatin. Interacts with HDAC1 and HDAC2 via its C-terminal acetyl-CoA-binding domain. Interacts with EZH2, EED, SUZ12, REST, EHMT1 and EHMT2. Part of a complex containing at least CDYL, REST, WIZ, SETB1, EHMT1 and EHMT2. Part of a complex containing at least CDYL, MIER1, MIER2, HDAC1 and HDAC2. Interacts with CHAF1A and CHAF1B; bridging the CAF-1 complex to the MCM2-7 (MCM) complex. Interacts with MCM3 and MCM5; bridging the CAF-1 complex to the MCM2-7 (MCM) complex. Interacts with EHMT2 and PRDM9; interaction only takes place when PRDM9 is bound to hotspot DNA. As to expression, highly expressed in testis (at protein level). Expressed in the hippocampus (at protein level). Expressed in the medial prefrontal cortex, prelimbic cortex, intralimbic cortex and cingulate cortex area (at protein level). Isoform 1: Expressed as 2 transcripts encoding the same protein, a ubiquitous transcript and a highly expressed testis-specific transcript.

It localises to the nucleus. Its subcellular location is the chromosome. The enzyme catalyses L-lysyl-[protein] + acetyl-CoA = N(6)-acetyl-L-lysyl-[protein] + CoA + H(+). It carries out the reaction 3-hydroxybutanoyl-CoA = (2E)-butenoyl-CoA + H2O. Functionally, chromatin reader protein that recognizes and binds histone H3 trimethylated at 'Lys-9', dimethylated at 'Lys-27' and trimethylated at 'Lys-27' (H3K9me3, H3K27me2 and H3K27me3, respectively). Part of multimeric repressive chromatin complexes, where it is required for transmission and restoration of repressive histone marks, thereby preserving the epigenetic landscape. Required for chromatin targeting and maximal enzymatic activity of Polycomb repressive complex 2 (PRC2); acts as a positive regulator of PRC2 activity by bridging the pre-existing histone H3K27me3 and newly recruited PRC2 on neighboring nucleosomes. Acts as a corepressor for REST by facilitating histone-lysine N-methyltransferase EHMT2 recruitment and H3K9 dimethylation at REST target genes for repression. Involved in X chromosome inactivation in females: recruited to Xist RNA-coated X chromosome and facilitates propagation of H3K9me2 by anchoring EHMT2. Promotes EZH2 accumulation and H3K27me3 methylation at DNA double strand breaks (DSBs), thereby facilitating transcriptional repression at sites of DNA damage and homology-directed repair of DSBs. Required for neuronal migration during brain development by repressing expression of RHOA. By repressing the expression of SCN8A, contributes to the inhibition of intrinsic neuronal excitability and epileptogenesis. In addition to acting as a chromatin reader, acts as a hydro-lyase. Shows crotonyl-coA hydratase activity by mediating the conversion of crotonyl-CoA ((2E)-butenoyl-CoA) to beta-hydroxybutyryl-CoA (3-hydroxybutanoyl-CoA), thereby acting as a negative regulator of histone crotonylation. Histone crotonylation is required during spermatogenesis; down-regulation of histone crotonylation by CDYL regulates the reactivation of sex chromosome-linked genes in round spermatids and histone replacement in elongating spermatids. By regulating histone crotonylation and trimethylation of H3K27, may be involved in stress-induced depression-like behaviors, possibly by regulating VGF expression. May have histone acetyltransferase activity; such activity is however unsure in vivo. In terms of biological role, not able to recognize and bind histone H3K9me3, histone H3K27me2 and histone H3K27me3, due to the presence of a N-terminal extension that inactivates the chromo domain. This is Chromodomain Y-like protein from Mus musculus (Mouse).